Here is a 152-residue protein sequence, read N- to C-terminus: Small ribosomal subunit protein bS6 (152 aa).

The tract at residues 96–152 is disordered; it reads HEEGPSAMLQKRDRDDRGERGDRGDRGDRGDRGFGGREDRPRRPRPTEESHGGEEEV.

This sequence belongs to the bacterial ribosomal protein bS6 family.

Its function is as follows. Binds together with bS18 to 16S ribosomal RNA. The protein is Small ribosomal subunit protein bS6 of Xanthobacter autotrophicus (strain ATCC BAA-1158 / Py2).